Here is a 55-residue protein sequence, read N- to C-terminus: Large ribosomal subunit protein bL33 (55 aa).

The protein belongs to the bacterial ribosomal protein bL33 family.

In Micrococcus luteus (strain ATCC 4698 / DSM 20030 / JCM 1464 / CCM 169 / CCUG 5858 / IAM 1056 / NBRC 3333 / NCIMB 9278 / NCTC 2665 / VKM Ac-2230) (Micrococcus lysodeikticus), this protein is Large ribosomal subunit protein bL33.